The following is a 178-amino-acid chain: Sec-independent protein translocase protein TatB (178 aa).

The helical transmembrane segment at 2 to 22 (LPEIGAAELLIIAAVALIVVG) threads the bilayer. The tract at residues 104–178 (HSPTGYENTV…KARKTAGSAE (75 aa)) is disordered. Pro residues predominate over residues 114–131 (EPPPPEPEPQPAAEPAPK). Over residues 141–154 (PKAAAAPKAAAKPK) the composition is skewed to low complexity.

This sequence belongs to the TatB family. In terms of assembly, the Tat system comprises two distinct complexes: a TatABC complex, containing multiple copies of TatA, TatB and TatC subunits, and a separate TatA complex, containing only TatA subunits. Substrates initially bind to the TatABC complex, which probably triggers association of the separate TatA complex to form the active translocon.

The protein localises to the cell inner membrane. Functionally, part of the twin-arginine translocation (Tat) system that transports large folded proteins containing a characteristic twin-arginine motif in their signal peptide across membranes. Together with TatC, TatB is part of a receptor directly interacting with Tat signal peptides. TatB may form an oligomeric binding site that transiently accommodates folded Tat precursor proteins before their translocation. The chain is Sec-independent protein translocase protein TatB from Phenylobacterium zucineum (strain HLK1).